We begin with the raw amino-acid sequence, 242 residues long: Ribosomal RNA small subunit methyltransferase G (242 aa).

S-adenosyl-L-methionine is bound by residues G78, L83, 130–131 (AE), and R151.

Belongs to the methyltransferase superfamily. RNA methyltransferase RsmG family.

It is found in the cytoplasm. Its function is as follows. Specifically methylates the N7 position of guanine in position 518 of 16S rRNA. The chain is Ribosomal RNA small subunit methyltransferase G from Salinispora tropica (strain ATCC BAA-916 / DSM 44818 / JCM 13857 / NBRC 105044 / CNB-440).